Consider the following 724-residue polypeptide: Probable methyltransferase PMT28 (724 aa).

At 1-22 (MMERKREMGIAYFARRIKQPRG) the chain is on the cytoplasmic side. The chain crosses the membrane as a helical; Signal-anchor for type II membrane protein span at residues 23–43 (IWVKMTFIVVLGLCFVFFWSF). The Lumenal segment spans residues 44–724 (LSSSASTFNV…LCAQKTLWRP (681 aa)). Residues 63 to 211 (EPVSSRTKSA…ISKKRKRKGP (149 aa)) are disordered. The span at 71–98 (SAHEVSESSKLHERGKVESGSKSKEGKK) shows a compositional bias: basic and acidic residues. Positions 107 to 125 (HETKKKKEHAVSHPHKKKD) are enriched in basic residues. The segment covering 126 to 140 (VPKPVVEEVVVKEDQ) has biased composition (basic and acidic residues). The span at 141–173 (EHEEAESDDSDQSNKEDGEEGTESDGNEGESDG) shows a compositional bias: acidic residues. Residues N305, N316, and N568 are each glycosylated (N-linked (GlcNAc...) asparagine).

This sequence belongs to the methyltransferase superfamily.

The protein localises to the golgi apparatus membrane. The chain is Probable methyltransferase PMT28 from Arabidopsis thaliana (Mouse-ear cress).